A 228-amino-acid polypeptide reads, in one-letter code: Sodium channel regulatory subunit beta-4 (228 aa).

Residues 1–30 (MSRAGNRGNTQARWLGIGLLGLFLLPMYLS) form the signal peptide. Positions 31-148 (LEVSVGKATT…KDLNNSATIF (118 aa)) constitute an Ig-like C2-type domain. Topologically, residues 31–161 (LEVSVGKATT…VDKLEEVDNT (131 aa)) are extracellular. N-linked (GlcNAc...) asparagine glycans are attached at residues Asn45, Asn71, Asn113, and Asn142. Residues Cys53 and Cys131 are joined by a disulfide bond. A helical transmembrane segment spans residues 162–182 (VTLIILAVVGGVIGLLVCILL). Topologically, residues 183-228 (LKKLITFILKKTREKKKECLVSSSGNDNTENGLPGSKAEEKPPTKV) are cytoplasmic. The disordered stretch occupies residues 199 to 228 (KECLVSSSGNDNTENGLPGSKAEEKPPTKV). Residues 203 to 213 (VSSSGNDNTEN) are compositionally biased toward polar residues. Residues 219–228 (KAEEKPPTKV) are compositionally biased toward basic and acidic residues.

The protein belongs to the sodium channel auxiliary subunit SCN4B (TC 8.A.17) family. A voltage-gated sodium (Nav) channel consists of an ion-conducting pore-forming alpha subunit functional on its own that is regulated by one or more beta subunits. The beta subunit SCN4B is disulfide-linked to the pore-forming alpha subunit. Interacts with SCN1A; regulatory subunit of SCN1A/Nav1.1. Interacts with SCN2A; regulatory subunit of SCN2A/Nav1.2. In terms of processing, contains an interchain disulfide bond with SCN2A. Expressed at a high level in dorsal root ganglia, at a lower level in brain, spinal cord, skeletal muscle and heart.

It localises to the cell membrane. Regulatory subunit of multiple voltage-gated sodium (Nav) channels directly mediating the depolarization of excitable membranes. Navs, also called VGSCs (voltage-gated sodium channels) or VDSCs (voltage-dependent sodium channels), operate by switching between closed and open conformations depending on the voltage difference across the membrane. In the open conformation they allow Na(+) ions to selectively pass through the pore, along their electrochemical gradient. The influx of Na+ ions provokes membrane depolarization, initiating the propagation of electrical signals throughout cells and tissues. The accessory beta subunits participate in localization and functional modulation of the Nav channels. Modulates the activity of SCN1A/Nav1.1. Modulates the activity of SCN2A/Nav1.2. This Rattus norvegicus (Rat) protein is Sodium channel regulatory subunit beta-4.